The primary structure comprises 501 residues: MSSSGTSDLPVLPTDLKIQYTKIFINNEWHDSVSGKKFPVFNPATEEELCQVEEGDKADVDKAVKAARQAFQIGSPWRTMDASERGRLLYKLADLIERDRLLLATMESMNGGKLYSNAYLNDLAGCIKTLRYCAGWADKIQGRTIPIDGNFFTYTRHEPIGVCGQIIPWNFPLVMLIWKIGPALSCGNTVVVKPAEQTPLTALHVASLIKEAGFPPGVVNIVPGYGPTAGAAISSHMDIDKVAFTGSTEVGKLIKEAAGKSNLKRVTLELGGKSPCIVLADADLDNAVEFAHHGVFYHQGQCCIAASRIFVEESIYDEFVRRSVERAKKYILGNPLTPGATQGPQIDKEQYDKILDLIESGKKEGAKLECGGGPWGNKGYFVQPTVFSNVTDEMRIAKEEIFGPVQQIMKFKSLDDVIKRANNTFYGLSAGVFTNDIDKAVTISSALQAGTVWVNCYGVVTAQCPFGGFKMSGNGRELGEYGFHEYTEVKTVTVKISQKNS.

Ser2 carries the post-translational modification N-acetylserine. An N6-acetyllysine mark is found at Lys91 and Lys128. Residues 167–170, 193–196, 226–227, and 246–247 contribute to the NAD(+) site; these read IPWN, KPAE, GP, and GS. Position 252 is an N6-acetyllysine (Lys252). The Proton acceptor role is filled by Glu269. 269-271 contributes to the NAD(+) binding site; that stretch reads ELG. Cys303 (nucleophile) is an active-site residue. A mediates interaction with PRMT3 region spans residues 336-501; it reads LTPGATQGPQ…VTVKISQKNS (166 aa). Position 337 is a phosphothreonine (Thr337). Position 349 to 353 (349 to 353) interacts with NAD(+); sequence EQYDK. 2 positions are modified to N6-acetyllysine: Lys353 and Lys367. Residue 400-402 coordinates NAD(+); sequence EIF. An N6-acetyllysine modification is found at Lys410. A Phosphoserine modification is found at Ser413. An N6-acetyllysine mark is found at Lys419 and Lys495.

It belongs to the aldehyde dehydrogenase family. In terms of assembly, homotetramer. Interacts with PRMT3; the interaction is direct, inhibits ALDH1A1 aldehyde dehydrogenase activity and is independent of the methyltransferase activity of PRMT3. Post-translationally, the N-terminus is blocked most probably by acetylation.

It localises to the cytoplasm. The protein resides in the cytosol. Its subcellular location is the cell projection. The protein localises to the axon. It catalyses the reaction an aldehyde + NAD(+) + H2O = a carboxylate + NADH + 2 H(+). The catalysed reaction is all-trans-retinal + NAD(+) + H2O = all-trans-retinoate + NADH + 2 H(+). It carries out the reaction 9-cis-retinal + NAD(+) + H2O = 9-cis-retinoate + NADH + 2 H(+). The enzyme catalyses 11-cis-retinal + NAD(+) + H2O = 11-cis-retinoate + NADH + 2 H(+). It catalyses the reaction 13-cis-retinal + NAD(+) + H2O = 13-cis-retinoate + NADH + 2 H(+). The catalysed reaction is 3-deoxyglucosone + NAD(+) + H2O = 2-dehydro-3-deoxy-D-gluconate + NADH + 2 H(+). It carries out the reaction (E)-4-hydroxynon-2-enal + NAD(+) + H2O = (E)-4-hydroxynon-2-enoate + NADH + 2 H(+). The enzyme catalyses malonaldehyde + NAD(+) + H2O = 3-oxopropanoate + NADH + 2 H(+). It catalyses the reaction hexanal + NAD(+) + H2O = hexanoate + NADH + 2 H(+). The catalysed reaction is propanal + NAD(+) + H2O = propanoate + NADH + 2 H(+). It carries out the reaction acetaldehyde + NAD(+) + H2O = acetate + NADH + 2 H(+). The enzyme catalyses benzaldehyde + NAD(+) + H2O = benzoate + NADH + 2 H(+). It catalyses the reaction 4-aminobutanal + NAD(+) + H2O = 4-aminobutanoate + NADH + 2 H(+). It participates in cofactor metabolism; retinol metabolism. Functionally, cytosolic dehydrogenase that catalyzes the irreversible oxidation of a wide range of aldehydes to their corresponding carboxylic acid. Functions downstream of retinol dehydrogenases and catalyzes the oxidation of retinaldehyde into retinoic acid, the second step in the oxidation of retinol/vitamin A into retinoic acid. This pathway is crucial to control the levels of retinol and retinoic acid, two important molecules which excess can be teratogenic and cytotoxic. Also oxidizes aldehydes resulting from lipid peroxidation like (E)-4-hydroxynon-2-enal/HNE, malonaldehyde and hexanal that form protein adducts and are highly cytotoxic. By participating for instance to the clearance of (E)-4-hydroxynon-2-enal/HNE in the lens epithelium prevents the formation of HNE-protein adducts and lens opacification. Also functions downstream of fructosamine-3-kinase in the fructosamine degradation pathway by catalyzing the oxidation of 3-deoxyglucosone, the carbohydrate product of fructosamine 3-phosphate decomposition, which is itself a potent glycating agent that may react with lysine and arginine side-chains of proteins. Also has an aminobutyraldehyde dehydrogenase activity and is probably part of an alternative pathway for the biosynthesis of GABA/4-aminobutanoate in midbrain, thereby playing a role in GABAergic synaptic transmission. The sequence is that of Aldehyde dehydrogenase 1A1 from Macaca fascicularis (Crab-eating macaque).